We begin with the raw amino-acid sequence, 62 residues long: Photosystem II reaction center protein Z (62 aa).

Helical transmembrane passes span 8 to 28 (AVFALIATSSILLISVPVVFA) and 41 to 61 (FSGTSLWIGLVFLVGILNSLI).

It belongs to the PsbZ family. PSII is composed of 1 copy each of membrane proteins PsbA, PsbB, PsbC, PsbD, PsbE, PsbF, PsbH, PsbI, PsbJ, PsbK, PsbL, PsbM, PsbT, PsbY, PsbZ, Psb30/Ycf12, at least 3 peripheral proteins of the oxygen-evolving complex and a large number of cofactors. It forms dimeric complexes.

The protein resides in the plastid. The protein localises to the chloroplast thylakoid membrane. Its function is as follows. May control the interaction of photosystem II (PSII) cores with the light-harvesting antenna, regulates electron flow through the 2 photosystem reaction centers. PSII is a light-driven water plastoquinone oxidoreductase, using light energy to abstract electrons from H(2)O, generating a proton gradient subsequently used for ATP formation. This Vitis vinifera (Grape) protein is Photosystem II reaction center protein Z.